A 209-amino-acid polypeptide reads, in one-letter code: Large ribosomal subunit protein uL4 (209 aa).

The segment at M50–A89 is disordered.

This sequence belongs to the universal ribosomal protein uL4 family. Part of the 50S ribosomal subunit.

Its function is as follows. One of the primary rRNA binding proteins, this protein initially binds near the 5'-end of the 23S rRNA. It is important during the early stages of 50S assembly. It makes multiple contacts with different domains of the 23S rRNA in the assembled 50S subunit and ribosome. Functionally, forms part of the polypeptide exit tunnel. This chain is Large ribosomal subunit protein uL4, found in Bdellovibrio bacteriovorus (strain ATCC 15356 / DSM 50701 / NCIMB 9529 / HD100).